The chain runs to 157 residues: Ribonuclease H (157 aa).

In terms of domain architecture, RNase H type-1 spans 1 to 146 (MPELFAYTDG…ADALAREGMA (146 aa)). Mg(2+) is bound by residues Asp-9, Glu-52, Asp-74, and Asp-138.

It belongs to the RNase H family. Monomer. The cofactor is Mg(2+).

The protein localises to the cytoplasm. It carries out the reaction Endonucleolytic cleavage to 5'-phosphomonoester.. Endonuclease that specifically degrades the RNA of RNA-DNA hybrids. The polypeptide is Ribonuclease H (Dinoroseobacter shibae (strain DSM 16493 / NCIMB 14021 / DFL 12)).